Here is a 268-residue protein sequence, read N- to C-terminus: MADS-box protein FBP24 (268 aa).

Residues 4-64 form the MADS-box domain; sequence MGRGKIEVKR…GKLFEYCSQP (61 aa). One can recognise a K-box domain in the interval 88-178; that stretch reads RVQLYDEVAK…YQWLMNNQMY (91 aa). Positions 243-268 are disordered; that stretch reads NSISPYRLQPSHPNLQDSHVHGPSYD.

The protein resides in the nucleus. Its function is as follows. Probable transcription factor. The chain is MADS-box protein FBP24 (FBP24) from Petunia hybrida (Petunia).